The sequence spans 247 residues: tRNA pseudouridine synthase A 1 (247 aa).

Asp-53 functions as the Nucleophile in the catalytic mechanism. Residue Tyr-111 coordinates substrate.

Belongs to the tRNA pseudouridine synthase TruA family. As to quaternary structure, homodimer.

The catalysed reaction is uridine(38/39/40) in tRNA = pseudouridine(38/39/40) in tRNA. In terms of biological role, formation of pseudouridine at positions 38, 39 and 40 in the anticodon stem and loop of transfer RNAs. This is tRNA pseudouridine synthase A 1 from Bacillus cereus (strain ATCC 14579 / DSM 31 / CCUG 7414 / JCM 2152 / NBRC 15305 / NCIMB 9373 / NCTC 2599 / NRRL B-3711).